Here is a 707-residue protein sequence, read N- to C-terminus: Choline transporter-like protein 4 (707 aa).

Topologically, residues 1–33 (MGGKQDQDKEAYGKPAKYDPSFRGPIRNRSCTD) are cytoplasmic. The chain crosses the membrane as a helical span at residues 34 to 54 (IICCVLFFLFILGYIAVGILA). Residues 55-227 (WVYGDPKQVL…KIFEDFAQSW (173 aa)) lie on the Extracellular side of the membrane. N-linked (GlcNAc...) asparagine glycans are attached at residues Asn-68, Asn-185, and Asn-196. The chain crosses the membrane as a helical span at residues 228–248 (YWILIALGLALVLSLLFILLL). The Cytoplasmic portion of the chain corresponds to 249 to 250 (RL). The chain crosses the membrane as a helical span at residues 251–271 (VAGPLVFVLIIGVLGVLAYGI). Over 272–307 (YHCWEEYRVLRDKGASISQLGFTTNLSAYRNVQETW) the chain is Extracellular. The N-linked (GlcNAc...) asparagine glycan is linked to Asn-296. The helical transmembrane segment at 308–328 (LAALIILAVLEGVLLLMLIFL) threads the bilayer. Over 329–356 (RQRICIAIALLKEASRAVGYIMSTMFYP) the chain is Cytoplasmic. The chain crosses the membrane as a helical span at residues 357-377 (LVTFALLLVCIAYWAIIALFL). The Extracellular portion of the chain corresponds to 378–452 (ATSGQPQYVF…AVLGLFWTIN (75 aa)). 3 N-linked (GlcNAc...) asparagine glycosylation sites follow: Asn-391, Asn-403, and Asn-413. Residues 453–473 (WVLALGQCVLAGAFASFYWAF) form a helical membrane-spanning segment. The Cytoplasmic segment spans residues 474 to 498 (HKPRDIPTFPLGSAFLRTLRYHTGS). A helical membrane pass occupies residues 499–519 (LAFGALILTLVQIARVILEYI). Over 520–557 (DHKLRGAQNPLTRCILCCFKCCLWCLEKFIKFLNRNAY) the chain is Extracellular. Residues 558-578 (IMIAIYGKNFCVSAKNAFMLL) form a helical membrane-spanning segment. Over 579–594 (MRNIVRVVVLDKVTDL) the chain is Cytoplasmic. A helical transmembrane segment spans residues 595 to 615 (LLFFGKLLVVGGVGVLSFFFF). Topologically, residues 616-635 (TGRIPSLGKTFENPQLNYYW) are extracellular. Residues 636 to 656 (LPIMVSILGAYLIASGFFSVF) traverse the membrane as a helical segment. At 657–707 (GMCVDTLFLCFLEDLERNDGSADRPYYMSKSLLKILGKKNKGTPGDKKRKK) the chain is on the cytoplasmic side.

The protein belongs to the CTL (choline transporter-like) family. N-glycosylated; N-glycosylation of Asn-68 and Asn-391 is required for a proper thiamine pyrophosphate uptake.

The protein localises to the membrane. It is found in the apical cell membrane. The catalysed reaction is choline(out) + n H(+)(in) = choline(in) + n H(+)(out). It catalyses the reaction thiamine diphosphate(out) = thiamine diphosphate(in). Its function is as follows. Choline transporter that plays a role in the choline-acetylcholine system and is required to the efferent innervation of hair cells in the olivocochlear bundle for the maintenance of physiological function of outer hair cells and the protection of hair cells from acoustic injury. Also described as a thiamine pyrophosphate transporter in colon, may mediate the absorption of microbiota-generated thiamine pyrophosphate and contribute to host thiamine (vitamin B1) homeostasis. The chain is Choline transporter-like protein 4 from Bos taurus (Bovine).